The primary structure comprises 342 residues: Alanine racemase (342 aa).

Lysine 33 acts as the Proton acceptor; specific for D-alanine in catalysis. N6-(pyridoxal phosphate)lysine is present on lysine 33. Residue arginine 128 coordinates substrate. The active-site Proton acceptor; specific for L-alanine is tyrosine 240. Methionine 288 is a binding site for substrate.

Belongs to the alanine racemase family. It depends on pyridoxal 5'-phosphate as a cofactor.

The catalysed reaction is L-alanine = D-alanine. It participates in amino-acid biosynthesis; D-alanine biosynthesis; D-alanine from L-alanine: step 1/1. Functionally, catalyzes the interconversion of L-alanine and D-alanine. May also act on other amino acids. This Jannaschia sp. (strain CCS1) protein is Alanine racemase (alr).